The chain runs to 475 residues: 3-isopropylmalate dehydratase large subunit (475 aa).

[4Fe-4S] cluster is bound by residues C353, C414, and C417.

The protein belongs to the aconitase/IPM isomerase family. LeuC type 1 subfamily. Heterodimer of LeuC and LeuD. [4Fe-4S] cluster is required as a cofactor.

The catalysed reaction is (2R,3S)-3-isopropylmalate = (2S)-2-isopropylmalate. Its pathway is amino-acid biosynthesis; L-leucine biosynthesis; L-leucine from 3-methyl-2-oxobutanoate: step 2/4. Catalyzes the isomerization between 2-isopropylmalate and 3-isopropylmalate, via the formation of 2-isopropylmaleate. The chain is 3-isopropylmalate dehydratase large subunit from Ectopseudomonas mendocina (strain ymp) (Pseudomonas mendocina).